Reading from the N-terminus, the 242-residue chain is Aspartate/glutamate leucyltransferase (242 aa).

The protein belongs to the R-transferase family. Bpt subfamily.

The protein resides in the cytoplasm. The catalysed reaction is N-terminal L-glutamyl-[protein] + L-leucyl-tRNA(Leu) = N-terminal L-leucyl-L-glutamyl-[protein] + tRNA(Leu) + H(+). It carries out the reaction N-terminal L-aspartyl-[protein] + L-leucyl-tRNA(Leu) = N-terminal L-leucyl-L-aspartyl-[protein] + tRNA(Leu) + H(+). Functions in the N-end rule pathway of protein degradation where it conjugates Leu from its aminoacyl-tRNA to the N-termini of proteins containing an N-terminal aspartate or glutamate. The protein is Aspartate/glutamate leucyltransferase of Alcanivorax borkumensis (strain ATCC 700651 / DSM 11573 / NCIMB 13689 / SK2).